We begin with the raw amino-acid sequence, 1450 residues long: Sister chromatid cohesion protein PDS5 homolog (1450 aa).

3 disordered regions span residues 1 to 145 (MATR…KETK), 680 to 707 (VGGSTTPTSKKSQPPQQQQQQQQQQQQQ), and 1340 to 1450 (LPPL…EVEN). The segment covering 45 to 59 (DDGELDSDIDEEDES) has biased composition (acidic residues). A compositionally biased stretch (low complexity) spans 77–138 (KTQQQPQKSI…TSSSSQQSTQ (62 aa)). A coiled-coil region spans residues 650 to 716 (KQLFKKYLEE…QLQQPENDIE (67 aa)). Positions 682–691 (GSTTPTSKKS) are enriched in polar residues. 2 stretches are compositionally biased toward low complexity: residues 692–707 (QPPQQQQQQQQQQQQQ) and 1350–1363 (NNNNNNNNTNSTNN). A compositionally biased stretch (basic and acidic residues) spans 1369–1378 (DENNNNKNDN). A compositionally biased stretch (low complexity) spans 1387-1401 (NSTTAVPQKSIISKP). A compositionally biased stretch (basic residues) spans 1402–1427 (PAKKVSKKAAAKQKSPKKKTNKKKKQ). The segment covering 1430–1450 (SEEEVSSSEEEDESQDEEVEN) has biased composition (acidic residues).

The protein belongs to the PDS5 family.

The protein localises to the nucleus. Its function is as follows. May regulate sister chromatid cohesion during mitosis and couple it to DNA replication. The chain is Sister chromatid cohesion protein PDS5 homolog from Dictyostelium discoideum (Social amoeba).